Reading from the N-terminus, the 119-residue chain is NADH-quinone oxidoreductase subunit A (119 aa).

Transmembrane regions (helical) follow at residues 7–27, 63–83, and 88–108; these read FPVLLFILVGIGVGLVPMFLG, LIAILFILFDLETAFLFPWGV, and IGWLGYASMVIFLLEFIVGFV.

It belongs to the complex I subunit 3 family. In terms of assembly, NDH-1 is composed of 14 different subunits. Subunits NuoA, H, J, K, L, M, N constitute the membrane sector of the complex.

It localises to the cell inner membrane. It catalyses the reaction a quinone + NADH + 5 H(+)(in) = a quinol + NAD(+) + 4 H(+)(out). NDH-1 shuttles electrons from NADH, via FMN and iron-sulfur (Fe-S) centers, to quinones in the respiratory chain. The immediate electron acceptor for the enzyme in this species is believed to be ubiquinone. Couples the redox reaction to proton translocation (for every two electrons transferred, four hydrogen ions are translocated across the cytoplasmic membrane), and thus conserves the redox energy in a proton gradient. This is NADH-quinone oxidoreductase subunit A from Polynucleobacter necessarius subsp. necessarius (strain STIR1).